We begin with the raw amino-acid sequence, 354 residues long: Hyaluronan and proteoglycan link protein 1 (354 aa).

Residues 1-9 (MKSLLLLVL) constitute a propeptide that is removed on maturation. N-linked (GlcNAc...) asparagine glycosylation is found at N21 and N56. In terms of domain architecture, Ig-like V-type spans 38–152 (PRLLVEAEQA…EGLEDDTAVV (115 aa)). 5 disulfides stabilise this stretch: C61–C139, C181–C252, C205–C226, C279–C349, and C304–C325. Link domains follow at residues 159-254 (VVFP…FCFT) and 259-351 (GRFY…YCFR).

It belongs to the HAPLN family.

It is found in the secreted. The protein resides in the extracellular space. It localises to the extracellular matrix. Stabilizes the aggregates of proteoglycan monomers with hyaluronic acid in the extracellular cartilage matrix. The protein is Hyaluronan and proteoglycan link protein 1 (HAPLN1) of Sus scrofa (Pig).